A 444-amino-acid polypeptide reads, in one-letter code: Homogentisate 1,2-dioxygenase (444 aa).

H298 functions as the Proton acceptor in the catalytic mechanism. Fe cation-binding residues include H341 and E347. Homogentisate contacts are provided by Y356 and H377. Residue H377 coordinates Fe cation.

Belongs to the homogentisate dioxygenase family. As to quaternary structure, hexamer; dimer of trimers. The cofactor is Fe cation.

It catalyses the reaction homogentisate + O2 = 4-maleylacetoacetate + H(+). The protein operates within amino-acid degradation; L-phenylalanine degradation; acetoacetate and fumarate from L-phenylalanine: step 4/6. In terms of biological role, involved in the catabolism of homogentisate (2,5-dihydroxyphenylacetate or 2,5-OH-PhAc), a central intermediate in the degradation of phenylalanine and tyrosine. Catalyzes the oxidative ring cleavage of the aromatic ring of homogentisate to yield maleylacetoacetate. This Burkholderia orbicola (strain AU 1054) protein is Homogentisate 1,2-dioxygenase.